The primary structure comprises 120 residues: Large ribosomal subunit protein uL22 (120 aa).

The protein belongs to the universal ribosomal protein uL22 family. Part of the 50S ribosomal subunit.

In terms of biological role, this protein binds specifically to 23S rRNA; its binding is stimulated by other ribosomal proteins, e.g. L4, L17, and L20. It is important during the early stages of 50S assembly. It makes multiple contacts with different domains of the 23S rRNA in the assembled 50S subunit and ribosome. The globular domain of the protein is located near the polypeptide exit tunnel on the outside of the subunit, while an extended beta-hairpin is found that lines the wall of the exit tunnel in the center of the 70S ribosome. In Corynebacterium glutamicum (strain R), this protein is Large ribosomal subunit protein uL22.